Reading from the N-terminus, the 122-residue chain is MKLFIILGALNAMMAVGTGAFGAHGLQGKISDHYLSVWEKATTYQMYHGLALLIIGVISGTTSINVNWAGWLIFAGIIFFSGSLYILVLTQIKVLGAITPIGGVLFIIGWIMLIIATFKFAG.

A run of 4 helical transmembrane segments spans residues 3-23 (LFII…AFGA), 46-66 (MYHG…SINV), 69-89 (AGWL…ILVL), and 98-118 (ITPI…IATF).

Belongs to the UPF0382 family.

The protein resides in the cell membrane. The polypeptide is UPF0382 membrane protein SAUSA300_0565 (Staphylococcus aureus (strain USA300)).